A 533-amino-acid chain; its full sequence is (E)-beta-farnesene synthase (533 aa).

Mg(2+)-binding residues include Asp286, Asp290, Asn430, Ser434, and Glu438. The DDXXD motif motif lies at 286 to 290 (DDMMD).

The protein belongs to the terpene synthase family. Mg(2+) is required as a cofactor. It depends on Co(2+) as a cofactor. Mn(2+) serves as cofactor.

It is found in the cytoplasm. It catalyses the reaction (2E,6E)-farnesyl diphosphate = (E)-beta-farnesene + diphosphate. Its pathway is secondary metabolite biosynthesis; terpenoid biosynthesis. Its function is as follows. Sesquiterpene cyclase catalyzing the production of sixfold more beta-farnesene than alpha-bergamotene from farnesyl diphosphate. Involved in indirect defense by producing volatile signals attracting natural enemies of herbivores. The polypeptide is (E)-beta-farnesene synthase (Zea diploperennis (Diploperennial teosinte)).